The primary structure comprises 251 residues: Protein unc-119 homolog B (251 aa).

Positions 1-13 are enriched in polar residues; it reads MSGSNPKAATAGS. Residues 1–56 form a disordered region; the sequence is MSGSNPKAATAGSQAGPGGLVAGKEEKKKAGGGVLNRLKARRQGPPHTPDDGSGAA. Residue S2 is modified to N-acetylserine. N6-acetyllysine is present on K24. Residue Y142 participates in tetradecanoate binding.

Belongs to the PDE6D/unc-119 family. Found in a complex with ARL3, RP2 and UNC119B; RP2 induces hydrolysis of GTP ARL3 in the complex, leading to the release of UNC119B. Interacts with NPHP3 (when myristoylated). Interacts with CYS1 (when myristoylated). Interacts with MACIR; interaction only takes place when UNC119B is not liganded with myristoylated proteins.

It is found in the cell projection. The protein resides in the cilium. Its function is as follows. Myristoyl-binding protein that acts as a cargo adapter: specifically binds the myristoyl moiety of a subset of N-terminally myristoylated proteins and is required for their localization. Binds myristoylated NPHP3 and plays a key role in localization of NPHP3 to the primary cilium membrane. Does not bind all myristoylated proteins. Probably plays a role in trafficking proteins in photoreceptor cells. The sequence is that of Protein unc-119 homolog B (Unc119b) from Mus musculus (Mouse).